The following is a 76-amino-acid chain: Sulfur carrier protein TusA (76 aa).

The active-site Cysteine persulfide intermediate is the C14.

The protein belongs to the sulfur carrier protein TusA family. As to quaternary structure, interacts with IscS.

Its subcellular location is the cytoplasm. Its pathway is tRNA modification. Its function is as follows. Sulfur carrier protein involved in sulfur trafficking in the cell. Part of a sulfur-relay system required for 2-thiolation during synthesis of 2-thiouridine of the modified wobble base 5-methylaminomethyl-2-thiouridine (mnm(5)s(2)U) in tRNA. Interacts with IscS and stimulates its cysteine desulfurase activity. Accepts an activated sulfur from IscS, which is then transferred to TusD, and thus determines the direction of sulfur flow from IscS to 2-thiouridine formation. Also appears to be involved in sulfur transfer for the biosynthesis of molybdopterin. The chain is Sulfur carrier protein TusA from Buchnera aphidicola subsp. Acyrthosiphon pisum (strain 5A).